Reading from the N-terminus, the 105-residue chain is Small ribosomal subunit protein uS10 (105 aa).

This sequence belongs to the universal ribosomal protein uS10 family. As to quaternary structure, part of the 30S ribosomal subunit.

Functionally, involved in the binding of tRNA to the ribosomes. This is Small ribosomal subunit protein uS10 from Rickettsia massiliae (strain Mtu5).